The primary structure comprises 197 residues: Dephospho-CoA kinase (197 aa).

Positions 2–197 (RIGLTGGIAS…YDALAKTAHE (196 aa)) constitute a DPCK domain. An ATP-binding site is contributed by 10–15 (ASGKSL).

It belongs to the CoaE family.

The protein resides in the cytoplasm. The enzyme catalyses 3'-dephospho-CoA + ATP = ADP + CoA + H(+). It participates in cofactor biosynthesis; coenzyme A biosynthesis; CoA from (R)-pantothenate: step 5/5. In terms of biological role, catalyzes the phosphorylation of the 3'-hydroxyl group of dephosphocoenzyme A to form coenzyme A. This chain is Dephospho-CoA kinase, found in Shouchella clausii (strain KSM-K16) (Alkalihalobacillus clausii).